Reading from the N-terminus, the 296-residue chain is 4-hydroxybenzoate octaprenyltransferase (296 aa).

A run of 8 helical transmembrane segments spans residues 29-49 (AGWL…AGGF), 52-72 (WHLL…GCCI), 103-123 (LVLG…TNAI), 151-171 (VLGV…LGEV), 176-196 (WLLM…YAMV), 220-240 (VILL…MPYV), 243-263 (ALFT…YTLI), and 275-295 (FRLN…SYAL).

The protein belongs to the UbiA prenyltransferase family. The cofactor is Mg(2+).

It is found in the cell inner membrane. It catalyses the reaction all-trans-octaprenyl diphosphate + 4-hydroxybenzoate = 4-hydroxy-3-(all-trans-octaprenyl)benzoate + diphosphate. Its pathway is cofactor biosynthesis; ubiquinone biosynthesis. Functionally, catalyzes the prenylation of para-hydroxybenzoate (PHB) with an all-trans polyprenyl group. Mediates the second step in the final reaction sequence of ubiquinone-8 (UQ-8) biosynthesis, which is the condensation of the polyisoprenoid side chain with PHB, generating the first membrane-bound Q intermediate 3-octaprenyl-4-hydroxybenzoate. In Albidiferax ferrireducens (strain ATCC BAA-621 / DSM 15236 / T118) (Rhodoferax ferrireducens), this protein is 4-hydroxybenzoate octaprenyltransferase.